Reading from the N-terminus, the 333-residue chain is Meiotic drive suppressor wtf9 (333 aa).

Residues 1–69 (MKNNYTSLKS…ENHSSGTTDN (69 aa)) form a disordered region. Basic and acidic residues predominate over residues 19 to 30 (KTDHEIDLEKGP). Transmembrane regions (helical) follow at residues 73-95 (LLIKLLISFTSIILFNAPAVCYL), 108-130 (VEWTLFGFWCFVCTLALIFLTYF), 174-191 (WVVIIWLLWVVICYTLFL), and 204-226 (LICSTCSISAALLLFLLYVRLPF).

The protein belongs to the WTF family. Homomer. Interacts with other proteins that exhibit high sequence similarity.

The protein localises to the spore membrane. The protein resides in the vacuole membrane. Its function is as follows. Acts as a suppressor component of the dual wtf meiotic drive system, and can suppress but not confer meiotic drive by compatible poisons. Wtf meiotic drive systems promote unequal transmission of alleles from the parental zygote to progeny spores by encoding a poison and an antidote from the same locus; the poison is trans-acting and forms toxic aggregates in all spores within an ascus, wherease the antidote is spore-specific and targets aggregates for degradation by the vacuole. Meiotic drive by wtf systems therefore lead to poisoning of all progeny that do not inherit the dual poison/antidote allele, or express a compatible antidote. In Schizosaccharomyces pombe (strain 972 / ATCC 24843) (Fission yeast), this protein is Meiotic drive suppressor wtf9.